The following is a 337-amino-acid chain: Secreted effector protein EspF(U) (337 aa).

5 consecutive repeat copies span residues 96-142 (IKPA…AEHG), 143-189 (IQPA…AEHG), 190-236 (IQPA…AEHG), 237-283 (IQPA…AEHG), and 284-330 (IQPA…AEHG). Positions 96 to 330 (IKPARSMAEH…RLMQHLAEHG (235 aa)) are 5 X 48 AA approximate tandem repeats. The tract at residues 291 to 312 (AEHIPPAPNWPAPTPPVQNEQS) is disordered. Pro residues predominate over residues 295–306 (PPAPNWPAPTPP).

The protein belongs to the EspF(U)/TccP family. As to quaternary structure, interacts with host BAIAP2 and host WASL/N-WASP. Can also interact with host proteins BAIAP2L1 and WAS/WASP.

The protein localises to the secreted. It localises to the host cytoplasm. Its function is as follows. Required for efficient pedestal formation in host epithelial cells during infection. Acts as an intermediate between Tir (via host BAIAP2) and host WASL/N-WASP. Directly binds and activates WASL/N-WASP, which stimulates actin polymerization and leads to the formation of actin pedestals at the sites of bacterial adhesion. This Escherichia coli O157:H7 protein is Secreted effector protein EspF(U) (espF(U)).